The sequence spans 192 residues: Acireductone dioxygenase 2 (192 aa).

Histidine 99, histidine 101, glutamate 105, and histidine 144 together coordinate Fe(2+). 4 residues coordinate Ni(2+): histidine 99, histidine 101, glutamate 105, and histidine 144.

It belongs to the acireductone dioxygenase (ARD) family. Requires Fe(2+) as cofactor. It depends on Ni(2+) as a cofactor.

Its subcellular location is the cytoplasm. The protein resides in the nucleus. It carries out the reaction 1,2-dihydroxy-5-(methylsulfanyl)pent-1-en-3-one + O2 = 4-methylsulfanyl-2-oxobutanoate + formate + 2 H(+). The catalysed reaction is 1,2-dihydroxy-5-(methylsulfanyl)pent-1-en-3-one + O2 = 3-(methylsulfanyl)propanoate + CO + formate + 2 H(+). It functions in the pathway amino-acid biosynthesis; L-methionine biosynthesis via salvage pathway; L-methionine from S-methyl-5-thio-alpha-D-ribose 1-phosphate: step 5/6. Catalyzes 2 different reactions between oxygen and the acireductone 1,2-dihydroxy-3-keto-5-methylthiopentene (DHK-MTPene) depending upon the metal bound in the active site. Fe-containing acireductone dioxygenase (Fe-ARD) produces formate and 2-keto-4-methylthiobutyrate (KMTB), the alpha-ketoacid precursor of methionine in the methionine recycle pathway. Ni-containing acireductone dioxygenase (Ni-ARD) produces methylthiopropionate, carbon monoxide and formate, and does not lie on the methionine recycle pathway. The protein is Acireductone dioxygenase 2 (ARD2) of Arabidopsis thaliana (Mouse-ear cress).